The primary structure comprises 322 residues: Ribosomal RNA small subunit methyltransferase H (322 aa).

S-adenosyl-L-methionine-binding positions include 40–42 (GGH), Asp-60, Phe-84, Asp-106, and Gln-113.

It belongs to the methyltransferase superfamily. RsmH family.

It localises to the cytoplasm. The enzyme catalyses cytidine(1402) in 16S rRNA + S-adenosyl-L-methionine = N(4)-methylcytidine(1402) in 16S rRNA + S-adenosyl-L-homocysteine + H(+). Specifically methylates the N4 position of cytidine in position 1402 (C1402) of 16S rRNA. This Aggregatibacter aphrophilus (strain NJ8700) (Haemophilus aphrophilus) protein is Ribosomal RNA small subunit methyltransferase H.